The sequence spans 119 residues: Protein TusC (119 aa).

It belongs to the DsrF/TusC family. As to quaternary structure, heterohexamer, formed by a dimer of trimers. The hexameric TusBCD complex contains 2 copies each of TusB, TusC and TusD. The TusBCD complex interacts with TusE.

It localises to the cytoplasm. In terms of biological role, part of a sulfur-relay system required for 2-thiolation of 5-methylaminomethyl-2-thiouridine (mnm(5)s(2)U) at tRNA wobble positions. The chain is Protein TusC from Buchnera aphidicola subsp. Baizongia pistaciae (strain Bp).